A 1194-amino-acid polypeptide reads, in one-letter code: Protein argonaute 3 (1194 aa).

Basic and acidic residues predominate over residues 1–98; sequence MDRGGYRGGR…GRGGGGDRGR (98 aa). Disordered stretches follow at residues 1–277 and 299–341; these read MDRG…VSQS and TVLP…DKGG. Residues 142 to 158 are compositionally biased toward low complexity; it reads PPSSSQAQVSQGVAPGD. A compositionally biased stretch (basic and acidic residues) spans 167–180; the sequence is VGRDGVGDVGRDGV. The span at 181–214 shows a compositional bias: gly residues; sequence GDVGQGGVGDVGQVGVGDVGQGGVGDVGQGGVGD. Basic and acidic residues predominate over residues 215–228; that stretch reads VGRDGVGDVGRDGV. The segment covering 229 to 238 has biased composition (gly residues); sequence GDVGRGGVGD. Composition is skewed to low complexity over residues 256-277 and 299-316; these read QLQQ…VSQS and TVLP…HTAS. Over residues 317–326 the composition is skewed to polar residues; that stretch reads GSQVMTPKPS. Basic and acidic residues predominate over residues 327–341; the sequence is SSDKKEPVKRPDKGG. A PAZ domain is found at 540 to 656; it reads SVIEYLKLYF…VPMEFCNLVE (117 aa). Residues 841–1145 form the Piwi domain; the sequence is LVLCAMTGKH…AASRGRVYYE (305 aa).

It belongs to the argonaute family. Ago subfamily.

Functionally, involved in RNA-mediated post-transcriptional gene silencing (PTGS). Main component of the RNA-induced silencing complex (RISC) that binds to a short guide RNA such as a microRNA (miRNA) or small interfering RNA (siRNA). RISC uses the mature miRNA or siRNA as a guide for slicer-directed cleavage of homologous mRNAs to repress gene expression. This Arabidopsis thaliana (Mouse-ear cress) protein is Protein argonaute 3 (AGO3).